The chain runs to 689 residues: Glycine--tRNA ligase beta subunit (689 aa).

It belongs to the class-II aminoacyl-tRNA synthetase family. Tetramer of two alpha and two beta subunits.

The protein localises to the cytoplasm. The enzyme catalyses tRNA(Gly) + glycine + ATP = glycyl-tRNA(Gly) + AMP + diphosphate. The protein is Glycine--tRNA ligase beta subunit of Escherichia coli O127:H6 (strain E2348/69 / EPEC).